A 1143-amino-acid polypeptide reads, in one-letter code: Disease resistance protein Pik-1 (1143 aa).

The tract at residues 1–190 is structured coiled coil (CC) domain; sequence MEAAAMAVTA…PLRIMGGEMQ (190 aa). Positions 189 to 258 constitute an HMA domain; the sequence is MQKIVFKIPM…KVGHAELLQV (70 aa). The HMA-like domain stretch occupies residues 191–264; the sequence is KIVFKIPMVD…LLQVSQVKED (74 aa). The region spanning 282–570 is the NB-ARC domain; it reads HEVKTICILG…WIAEGFVSEE (289 aa). LRR repeat units lie at residues 681–706, 708–731, 732–754, 756–777, 778–800, 802–823, 824–848, 945–968, 979–1002, and 1004–1027; these read FKRLRVLDLEDNKDIQDSHLQGICEQ, SLRVRYLGLKGTRIRKLPQEMRKL, KHLEILYVGSTRISELPQEIGEL, HLRILDVRNTDITELPLQIREL, QHLHTLDVRNTPISELPPQVGKL, NLKIMCVRSTGVRELPKEIGEL, NHLQTLDVRNTRVRELPWQAGQISQ, MPNLQTLVLRFEALPRQPITINGT, DSRLPRIAFHEDAMPNLKLLEFKF, and AGPASNDAIGITNLKSLQKVVFRC.

This sequence belongs to the disease resistance NB-LRR family. As to quaternary structure, interacts with AVR-Pik through its N-terminal part containing the HMA-like domain.

In terms of biological role, disease resistance (R) protein that specifically recognizes the AVR-Pik effector avirulence protein from M.oryzae. Resistance proteins guard the plant against pathogens that contain an appropriate avirulence protein via an indirect interaction with this avirulence protein. That triggers a defense system including the hypersensitive response, which restricts the pathogen growth. Contribution of Pik-2 is required to recognize the effector avirulence protein AVR-Pik. This Oryza sativa subsp. japonica (Rice) protein is Disease resistance protein Pik-1.